The primary structure comprises 400 residues: Phosphoglycerate kinase (400 aa).

Substrate contacts are provided by residues 19–21 (DLN), R38, 61–64 (HLGR), R124, and R161. Residues K211, G299, E330, and 356 to 359 (GGDS) each bind ATP.

Belongs to the phosphoglycerate kinase family. Monomer.

Its subcellular location is the cytoplasm. It catalyses the reaction (2R)-3-phosphoglycerate + ATP = (2R)-3-phospho-glyceroyl phosphate + ADP. It participates in carbohydrate degradation; glycolysis; pyruvate from D-glyceraldehyde 3-phosphate: step 2/5. The protein is Phosphoglycerate kinase of Frankia alni (strain DSM 45986 / CECT 9034 / ACN14a).